Reading from the N-terminus, the 97-residue chain is Small, acid-soluble spore protein gamma-type (97 aa).

Over residues 1–42 (MAKQTNKTASGTSTQHVKQQNAQASKNNFGTEFGSETNVQEV) the composition is skewed to polar residues. The disordered stretch occupies residues 1–97 (MAKQTNKTAS…KNQNSGKYQG (97 aa)). 2 repeats span residues 23 to 56 (QASK…KSQN) and 58 to 91 (QASK…KNQN). The segment covering 43–63 (KQQNAQAAANKSQNAQASKNN) has biased composition (low complexity). Residues 69–78 (ASETSAQEVR) are compositionally biased toward polar residues. The segment covering 79–91 (QQNAQAQAKKNQN) has biased composition (low complexity).

The protein belongs to the gamma-type SASP family.

In terms of biological role, SASP are proteins degraded in the first minutes of spore germination and provide amino acids for both new protein synthesis and metabolism. These proteins may be involved in dormant spore's high resistance to UV light. The chain is Small, acid-soluble spore protein gamma-type (sasP-B) from Priestia megaterium (Bacillus megaterium).